Reading from the N-terminus, the 202-residue chain is Solute carrier family 66 member 3 (202 aa).

Residues 1–19 form the signal peptide; sequence MEAGLLWFCNWSTLGVCAA. Transmembrane regions (helical) follow at residues 33–53, 64–84, 94–114, and 171–191; these read SARG…LVFL, LTYL…LFVF, LPYM…KWII, and LTIL…TATV.

The protein resides in the membrane. This is Solute carrier family 66 member 3 (Slc66a3) from Mus musculus (Mouse).